The primary structure comprises 115 residues: Large ribosomal subunit protein bL20 (115 aa).

It belongs to the bacterial ribosomal protein bL20 family.

Its function is as follows. Binds directly to 23S ribosomal RNA and is necessary for the in vitro assembly process of the 50S ribosomal subunit. It is not involved in the protein synthesizing functions of that subunit. This chain is Large ribosomal subunit protein bL20, found in Methylococcus capsulatus (strain ATCC 33009 / NCIMB 11132 / Bath).